The following is a 382-amino-acid chain: D-alanine--D-alanine ligase (382 aa).

Positions 161 to 372 (KVVFEAAGLQ…YAELIDELIY (212 aa)) constitute an ATP-grasp domain. 193 to 248 (VDRLGYPVFVKPARAGSSMGISKVDSLEGLDAAIAAAREHDLKLVIEAGIVGREIE) serves as a coordination point for ATP. Asp-326, Glu-339, and Asn-341 together coordinate Mg(2+).

This sequence belongs to the D-alanine--D-alanine ligase family. The cofactor is Mg(2+). Mn(2+) is required as a cofactor.

The protein resides in the cytoplasm. It carries out the reaction 2 D-alanine + ATP = D-alanyl-D-alanine + ADP + phosphate + H(+). The protein operates within cell wall biogenesis; peptidoglycan biosynthesis. In terms of biological role, cell wall formation. The polypeptide is D-alanine--D-alanine ligase (Arthrobacter sp. (strain FB24)).